The sequence spans 595 residues: Alpha-1,3-galactosidase B (595 aa).

A signal peptide spans 1–22 (MKTILLFALSLLLSLSVSDVCA). PbH1 repeat units follow at residues 432 to 454 (TPEVLFAGNTIRNNRARGTLFST), 455 to 477 (PKKTVVEDNLFDHTSGTAILLCG), and 488 to 541 (CRDV…VIED).

The protein belongs to the glycosyl hydrolase 110 family. B subfamily.

The enzyme catalyses Hydrolysis of terminal, non-reducing branched (1-&gt;3)-alpha-D-galactosidic residues, producing free D-galactose.. The catalysed reaction is Hydrolysis of terminal, non-reducing linear (1-&gt;3)-alpha-D-galactosidic residues, producing free D-galactose.. It catalyses the reaction Hydrolysis of terminal, non-reducing alpha-D-galactose residues in alpha-D-galactosides, including galactose oligosaccharides, galactomannans and galactolipids.. Functionally, alpha-galactosidase. Removes both branched alpha-1,3-linked galactose residues of blood group B antigens and linear alpha-1,3-linked galactose structures. This chain is Alpha-1,3-galactosidase B (glaB), found in Bacteroides fragilis (strain YCH46).